The following is a 158-amino-acid chain: MISIADYFRQKDCDYWREYPHSYGKLDVFGKTIQIVGADCGSSALYFLMRGAKYIIQYEKEEHLRKRWEEACKYFNICDKAMMKNEWNGEYENADIFVIDCEGCEEHLNVDILKKYEQWCVGIHDWTKNRVELMRKMEGTIFTYVSDDGREMTLCKTS.

This is an uncharacterized protein from Saccharolobus islandicus (Sulfolobus islandicus).